A 351-amino-acid chain; its full sequence is Anthranilate phosphoribosyltransferase (351 aa).

5-phospho-alpha-D-ribose 1-diphosphate-binding positions include Gly-80, 83 to 84 (GD), Thr-88, 90 to 93 (NIST), 108 to 116 (KHGNRSITS), and Ser-120. Gly-80 serves as a coordination point for anthranilate. Residue Ser-92 participates in Mg(2+) binding. An anthranilate-binding site is contributed by Asn-111. Arg-166 provides a ligand contact to anthranilate. Mg(2+) contacts are provided by Asp-229 and Glu-230.

This sequence belongs to the anthranilate phosphoribosyltransferase family. Homodimer. Mg(2+) serves as cofactor.

It carries out the reaction N-(5-phospho-beta-D-ribosyl)anthranilate + diphosphate = 5-phospho-alpha-D-ribose 1-diphosphate + anthranilate. Its pathway is amino-acid biosynthesis; L-tryptophan biosynthesis; L-tryptophan from chorismate: step 2/5. Its function is as follows. Catalyzes the transfer of the phosphoribosyl group of 5-phosphorylribose-1-pyrophosphate (PRPP) to anthranilate to yield N-(5'-phosphoribosyl)-anthranilate (PRA). In Chlorobaculum tepidum (strain ATCC 49652 / DSM 12025 / NBRC 103806 / TLS) (Chlorobium tepidum), this protein is Anthranilate phosphoribosyltransferase.